An 863-amino-acid chain; its full sequence is Disintegrin and metalloproteinase domain-containing protein 15 (863 aa).

The N-terminal stretch at 1–17 is a signal peptide; it reads MRLALLWALGLLGAGSP. A propeptide spanning residues 18-206 is cleaved from the precursor; the sequence is LPSWPLPNIG…LGQRHIRRRR (189 aa). The interval 22 to 45 is disordered; that stretch reads PLPNIGGTEEQQAESEKAPREPLE. The segment covering 35-44 has biased composition (basic and acidic residues); that stretch reads ESEKAPREPL. Positions 177–184 match the Cysteine switch motif; that stretch reads HTCALSWR. Cys179 lines the Zn(2+) pocket. Residues 207 to 696 lie on the Extracellular side of the membrane; sequence DVVTETKTVE…QLKATSSLTT (490 aa). One can recognise a Peptidase M12B domain in the interval 213–414; sequence KTVELVIVAD…GMGSCLFERL (202 aa). Residue Asn237 is glycosylated (N-linked (GlcNAc...) asparagine). Cystine bridges form between Cys323-Cys409, Cys365-Cys393, Cys367-Cys376, and Cys480-Cys500. His348 is a binding site for Zn(2+). Glu349 is an active-site residue. Zn(2+) contacts are provided by His352 and His358. N-linked (GlcNAc...) asparagine glycans are attached at residues Asn389 and Asn392. Residues 421–508 form the Disintegrin domain; that stretch reads AAFCGNMFVE…QCPPDVSLGD (88 aa). Residues 484-486 carry the Cell attachment site motif; the sequence is RGD. N-linked (GlcNAc...) asparagine glycans are attached at residues Asn606 and Asn611. 3 disulfide bridges follow: Cys657–Cys667, Cys661–Cys673, and Cys675–Cys684. Residues 657 to 685 form the EGF-like domain; that stretch reads CRSKCHGHGVCDSNRHCYCEEGWAPPDCT. Residues 697–717 form a helical membrane-spanning segment; the sequence is GLLLSLLVLLVLVMLGASYWY. A phosphotyrosine; by HCK and LCK mark is found at Tyr715 and Tyr735. Residues 718–863 are Cytoplasmic-facing; that stretch reads RARLHQRLCQ…PPPTVSSLYL (146 aa). Residues 736–863 form a disordered region; that stretch reads RAAQSGPSER…PPPTVSSLYL (128 aa). The segment covering 767 to 778 has biased composition (pro residues); the sequence is PAPPSRPLPPDP. Positions 779-789 are enriched in basic and acidic residues; it reads VSKRLQAELAD. 2 stretches are compositionally biased toward pro residues: residues 791-800 and 813-824; these read PNPPTRPLPA and AKPPPPRKPLPA. Short sequence motifs (SH3-binding) lie at residues 815–821 and 850–856; these read PPPPRKP and RPAPPPP.

In terms of assembly, interacts with ITAGV-ITGB3 (vitronectin receptor). Interacts with SH3GL2 and SNX9; this interaction occurs preferentially with ADAM15 precursor, rather than the processed form, suggesting it occurs in a secretory pathway compartment prior to the medial Golgi. Interacts with ITAG9-ITGB1. Interacts specifically with Src family protein-tyrosine kinases (PTKs). Interacts with SH3PXD2A. Interacts with ITAGV-ITGB1. Interacts with GRB2, HCK, ITSN1, ITSN2, LYN, MAPK1, MAPK3, NCF1, NCK1, nephrocystin, PTK6, SNX33, LCK and SRC. Zn(2+) is required as a cofactor. Post-translationally, the precursor is cleaved by a furin endopeptidase. Phosphorylation increases association with PTKs. Expressed in colon and small intestine. Expressed in airway smooth muscle and glomerular mesangial cells (at protein level). Ubiquitously expressed. Overexpressed in atherosclerotic lesions. Constitutively expressed in cultured endothelium and smooth muscle. Expressed in chondrocytes. Expressed in airway smooth muscle and glomerular mesangial cells.

It is found in the endomembrane system. The protein localises to the cell junction. Its subcellular location is the adherens junction. It localises to the cell projection. The protein resides in the cilium. It is found in the flagellum. The protein localises to the cytoplasmic vesicle. Its subcellular location is the secretory vesicle. It localises to the acrosome. Its activity is regulated as follows. Inhibited by hydroxamate-type metalloproteinase inhibitors such as marimastat. Inhibited by metalloproteinase inhibitor 2 (TIMP-2) and TIMP-3 at nanomolar concentrations. Not significantly inhibited by TIMP-1 at concentrations of up to 100 nM. Not activated by PMA or ionomycin. Its function is as follows. Active metalloproteinase with gelatinolytic and collagenolytic activity. Plays a role in the wound healing process. Mediates both heterotypic intraepithelial cell/T-cell interactions and homotypic T-cell aggregation. Inhibits beta-1 integrin-mediated cell adhesion and migration of airway smooth muscle cells. Suppresses cell motility on or towards fibronectin possibly by driving alpha-v/beta-1 integrin (ITAGV-ITGB1) cell surface expression via ERK1/2 inactivation. Cleaves E-cadherin in response to growth factor deprivation. Plays a role in glomerular cell migration. Plays a role in pathological neovascularization. May play a role in cartilage remodeling. May be proteolytically processed, during sperm epididymal maturation and the acrosome reaction. May play a role in sperm-egg binding through its disintegrin domain. In Homo sapiens (Human), this protein is Disintegrin and metalloproteinase domain-containing protein 15 (ADAM15).